We begin with the raw amino-acid sequence, 316 residues long: Cysteine synthase (316 aa).

The hydrogen sulfide site is built by N7 and R35. K42 is modified (N6-(pyridoxal phosphate)lysine). Pyridoxal 5'-phosphate-binding positions include N72 and 177 to 181 (GTGGS). A hydrogen sulfide-binding site is contributed by L268. A pyridoxal 5'-phosphate-binding site is contributed by S272.

The protein belongs to the cysteine synthase/cystathionine beta-synthase family. In terms of assembly, homodimer. Pyridoxal 5'-phosphate is required as a cofactor.

It carries out the reaction O-acetyl-L-serine + hydrogen sulfide = L-cysteine + acetate. It functions in the pathway amino-acid biosynthesis; L-cysteine biosynthesis; L-cysteine from L-serine: step 2/2. The protein is Cysteine synthase (cysK) of Haemophilus influenzae (strain ATCC 51907 / DSM 11121 / KW20 / Rd).